A 318-amino-acid chain; its full sequence is Olfactory receptor 13C5 (318 aa).

Topologically, residues M1–L25 are extracellular. N5 is a glycosylation site (N-linked (GlcNAc...) asparagine). Residues L26–I46 traverse the membrane as a helical segment. Over L47–H54 the chain is Cytoplasmic. The helical transmembrane segment at L55–T75 threads the bilayer. Topologically, residues T76–V99 are extracellular. A disulfide bond links C97 and C189. Residues Q100 to F120 traverse the membrane as a helical segment. Residues D121 to D139 lie on the Cytoplasmic side of the membrane. Residues A140–T160 traverse the membrane as a helical segment. The Extracellular portion of the chain corresponds to V161–F197. A helical transmembrane segment spans residues I198–S217. Residues Y218–P237 lie on the Cytoplasmic side of the membrane. The chain crosses the membrane as a helical span at residues S238–M258. Topologically, residues Y259 to D277 are extracellular. Residues K278–L298 form a helical membrane-spanning segment. Over R299–K318 the chain is Cytoplasmic.

It belongs to the G-protein coupled receptor 1 family.

It is found in the cell membrane. Functionally, odorant receptor. This Homo sapiens (Human) protein is Olfactory receptor 13C5 (OR13C5).